The sequence spans 399 residues: Telomeric repeat-binding factor 2-interacting protein 1 (399 aa).

The interval 1-21 (MAEAMELGKDPNGPTHSSTLF) is disordered. Position 2 is an N-acetylalanine (alanine 2). A BRCT domain is found at 10 to 101 (DPNGPTHSST…EKLELEAYRL (92 aa)). 2 positions are modified to phosphoserine: serine 36 and serine 43. Residue lysine 114 forms a Glycyl lysine isopeptide (Lys-Gly) (interchain with G-Cter in SUMO2) linkage. A Myb-like domain is found at 130–190 (QSQAGRMVFT…SMKDRYLKRL (61 aa)). Serine 156 and serine 158 each carry phosphoserine. Lysine 196 is covalently cross-linked (Glycyl lysine isopeptide (Lys-Gly) (interchain with G-Cter in SUMO2)). Disordered stretches follow at residues 199–245 (LGEA…KEEI) and 279–309 (TMCDDDPCTPEEDSETQPDEEEEEEEKVSAP). Phosphoserine is present on residues serine 205 and serine 208. Residues lysine 210, lysine 214, and lysine 242 each participate in a glycyl lysine isopeptide (Lys-Gly) (interchain with G-Cter in SUMO2) cross-link. The span at 281-304 (CDDDPCTPEEDSETQPDEEEEEEE) shows a compositional bias: acidic residues. A Glycyl lysine isopeptide (Lys-Gly) (interchain with G-Cter in SUMO2) cross-link involves residue lysine 372. The Nuclear localization signal signature appears at 383 to 399 (KKFGAQNVARRIEFRKK).

Belongs to the RAP1 family. In terms of assembly, associates with the I-kappa-B-kinase (IKK) core complex, composed of CHUK, IKBKB and IKBKG. Homodimer. Component of the shelterin complex (telosome) composed of TERF1, TERF2, TINF2, TERF2IP ACD and POT1. Interacts with TERF2 (but not TERF1) with its C-terminus. Interacts with SLX4/BTBD12. Interacts with TERF2; the interaction is direct.

The protein localises to the nucleus. Its subcellular location is the cytoplasm. It is found in the chromosome. The protein resides in the telomere. Acts both as a regulator of telomere function and as a transcription regulator. Involved in the regulation of telomere length and protection as a component of the shelterin complex (telosome). In contrast to other components of the shelterin complex, it is dispensible for telomere capping and does not participate in the protection of telomeres against non-homologous end-joining (NHEJ)-mediated repair. Instead, it is required to negatively regulate telomere recombination and is essential for repressing homology-directed repair (HDR), which can affect telomere length. Does not bind DNA directly: recruited to telomeric double-stranded 5'-TTAGGG-3' repeats via its interaction with TERF2. Independently of its function in telomeres, also acts as a transcription regulator: recruited to extratelomeric 5'-TTAGGG-3' sites via its association with TERF2 or other factors, and regulates gene expression. When cytoplasmic, associates with the I-kappa-B-kinase (IKK) complex and acts as a regulator of the NF-kappa-B signaling by promoting IKK-mediated phosphorylation of RELA/p65, leading to activate expression of NF-kappa-B target genes. The polypeptide is Telomeric repeat-binding factor 2-interacting protein 1 (TERF2IP) (Bos taurus (Bovine)).